Consider the following 398-residue polypeptide: DNA-directed RNA polymerase III subunit RPC4 (398 aa).

The interval 1–114 is disordered; it reads MSEGNAAGEP…SHSIFEQGPA (114 aa). Residue S2 is modified to N-acetylserine. S42 carries the post-translational modification Phosphoserine. Residues 66–100 show a composition bias toward basic and acidic residues; that stretch reads KIKEEPKEEVTVKKEKRERDRDRQREGHGRGRGRP. Residues K68 and K78 each participate in a glycyl lysine isopeptide (Lys-Gly) (interchain with G-Cter in SUMO2) cross-link. 3 positions are modified to omega-N-methylarginine: R95, R97, and R99. Residues K141, K152, K160, K190, K199, K206, K220, K285, K302, K310, and K396 each participate in a glycyl lysine isopeptide (Lys-Gly) (interchain with G-Cter in SUMO2) cross-link. The tract at residues 220-244 is disordered; it reads KEEPRDEEEEAKMKAPPKAARKTPG.

It belongs to the eukaryotic RPC4/POLR3D RNA polymerase subunit family. In terms of assembly, component of the RNA polymerase III complex consisting of 17 subunits: a ten-subunit horseshoe-shaped catalytic core composed of POLR3A/RPC1, POLR3B/RPC2, POLR1C/RPAC1, POLR1D/RPAC2, POLR3K/RPC10, POLR2E/RPABC1, POLR2F/RPABC2, POLR2H/RPABC3, POLR2K/RPABC4 and POLR2L/RPABC5; a mobile stalk composed of two subunits POLR3H/RPC8 and CRCP/RPC9, protruding from the core and functioning primarily in transcription initiation; and additional subunits homologous to general transcription factors of the RNA polymerase II machinery, POLR3C/RPC3-POLR3F/RPC6-POLR3G/RPC7 heterotrimer required for transcription initiation and POLR3D/RPC4-POLR3E/RPC5 heterodimer involved in both transcription initiation and termination. Sumoylation on Lys-141 can serve as a signal to mark misfolded Pol III for proteasomal degradation.

It is found in the nucleus. Its function is as follows. DNA-dependent RNA polymerase catalyzes the transcription of DNA into RNA using the four ribonucleoside triphosphates as substrates. Specific peripheric component of RNA polymerase III (Pol III) which synthesizes small non-coding RNAs including 5S rRNA, snRNAs, tRNAs and miRNAs from at least 500 distinct genomic loci. Assembles with POLR3E/RPC5 forming a subcomplex that binds the Pol III core. Enables recruitment of Pol III at transcription initiation site and drives transcription initiation from both type 2 and type 3 DNA promoters. Required for efficient transcription termination and reinitiation. Pol III plays a key role in sensing and limiting infection by intracellular bacteria and DNA viruses. Acts as nuclear and cytosolic DNA sensor involved in innate immune response. Can sense non-self dsDNA that serves as template for transcription into dsRNA. The non-self RNA polymerase III transcripts, such as Epstein-Barr virus-encoded RNAs (EBERs) induce type I interferon and NF-kappa-B through the RIG-I pathway. In Homo sapiens (Human), this protein is DNA-directed RNA polymerase III subunit RPC4.